Here is a 300-residue protein sequence, read N- to C-terminus: MEIPMGTQGCFSKSLLLSASILVLWMLQGSQAALYIQKIPEQPQKNQDLLLSVQGVPDTFQDFNWYLGEETYGGTRLFTYIPGIQRPQRDGSAMGQRDIVGFPNGSMLLRRAQPTDSGTYQVAITINSEWTMKAKTEVQVAEKNKELPSTHLPTNAGILAATIIGSLAAGALLISCIAYLLVTRNWRGQSHRLPAPRGQGSLSILCSAVSPVPSVTPSTWMATTEKPELGPAHDAGDNNIYEVMPSPVLLVSPISDTRSINPARPLPTPPHLQAEPENHQYQQDLLNPDPAPYCQLVPTS.

The first 32 residues, 1 to 32, serve as a signal peptide directing secretion; sequence MEIPMGTQGCFSKSLLLSASILVLWMLQGSQA. The Extracellular segment spans residues 33 to 157; that stretch reads ALYIQKIPEQ…PSTHLPTNAG (125 aa). Asn104 carries N-linked (GlcNAc...) asparagine glycosylation. Residues 158–178 form a helical membrane-spanning segment; sequence ILAATIIGSLAAGALLISCIA. Over 179–300 the chain is Cytoplasmic; it reads YLLVTRNWRG…APYCQLVPTS (122 aa). The segment at 259-291 is disordered; the sequence is SINPARPLPTPPHLQAEPENHQYQQDLLNPDPA.

The protein belongs to the immunoglobulin superfamily. CEA family. Ubiquitous with highest expression in prostate, uterus, fetal brain, mammary gland, adrenal gland, skeletal muscle, small intestine, and kidney, and lower expression in lung, cerebellum, testis, liver, pancreas, bone marrow and ovary.

The protein resides in the membrane. This is Cell adhesion molecule CEACAM19 from Homo sapiens (Human).